Here is a 412-residue protein sequence, read N- to C-terminus: Putative competence-damage inducible protein (412 aa).

The protein belongs to the CinA family.

The polypeptide is Putative competence-damage inducible protein (Bacillus mycoides (strain KBAB4) (Bacillus weihenstephanensis)).